A 279-amino-acid polypeptide reads, in one-letter code: Large ribosomal subunit protein uL2 (279 aa).

Positions 218–279 are disordered; sequence RPQTRGSAMN…ITRRKSNPKR (62 aa). A compositionally biased stretch (basic residues) spans 255-279; sequence KGSKTRRKKASDKLIITRRKSNPKR.

Belongs to the universal ribosomal protein uL2 family. Part of the 50S ribosomal subunit. Forms a bridge to the 30S subunit in the 70S ribosome.

In terms of biological role, one of the primary rRNA binding proteins. Required for association of the 30S and 50S subunits to form the 70S ribosome, for tRNA binding and peptide bond formation. It has been suggested to have peptidyltransferase activity; this is somewhat controversial. Makes several contacts with the 16S rRNA in the 70S ribosome. In Sulfurimonas denitrificans (strain ATCC 33889 / DSM 1251) (Thiomicrospira denitrificans (strain ATCC 33889 / DSM 1251)), this protein is Large ribosomal subunit protein uL2.